Reading from the N-terminus, the 361-residue chain is Mannose-1-phosphate guanyltransferase (361 aa).

The protein belongs to the transferase hexapeptide repeat family.

It localises to the cytoplasm. It catalyses the reaction alpha-D-mannose 1-phosphate + GTP + H(+) = GDP-alpha-D-mannose + diphosphate. It functions in the pathway nucleotide-sugar biosynthesis; GDP-alpha-D-mannose biosynthesis; GDP-alpha-D-mannose from alpha-D-mannose 1-phosphate (GTP route): step 1/1. In terms of biological role, involved in cell wall synthesis where it is required for glycosylation. Involved in cell cycle progression through cell-size checkpoint. The chain is Mannose-1-phosphate guanyltransferase (MPG1) from Kluyveromyces lactis (strain ATCC 8585 / CBS 2359 / DSM 70799 / NBRC 1267 / NRRL Y-1140 / WM37) (Yeast).